The sequence spans 458 residues: Monomethylamine methyltransferase MtmB1 (458 aa).

Pyl202 is a non-standard amino acid (pyrrolysine).

This sequence belongs to the monomethylamine methyltransferase family. In terms of assembly, can form a complex with MtmC.

It carries out the reaction Co(I)-[methylamine-specific corrinoid protein] + methylamine + H(+) = methyl-Co(III)-[methylamine-specific corrinoid protein] + NH4(+). It participates in one-carbon metabolism; methanogenesis from methylamine. In terms of biological role, catalyzes the transfer of the methyl group from monomethylamine to the corrinoid cofactor of MtmC. The sequence is that of Monomethylamine methyltransferase MtmB1 (mtmB1) from Methanosarcina acetivorans (strain ATCC 35395 / DSM 2834 / JCM 12185 / C2A).